A 1278-amino-acid chain; its full sequence is Mediator of RNA polymerase II transcription subunit 16 (1278 aa).

Acidic residues predominate over residues 1 to 10; sequence MNQQNPEEEV. 3 disordered regions span residues 1–21, 530–557, and 839–861; these read MNQQ…GGGI, TKDF…GDEK, and SAGT…SPAT. Over residues 547–557 the composition is skewed to basic and acidic residues; the sequence is APKEPDSGDEK. A compositionally biased stretch (polar residues) spans 841-861; sequence GTGSNRNNVTSPTQNASSPAT.

This sequence belongs to the plant Mediator complex subunit 16 family. As to quaternary structure, component of the Mediator complex.

It localises to the nucleus. Functionally, component of the Mediator complex, a coactivator involved in the regulated transcription of nearly all RNA polymerase II-dependent genes. Mediator functions as a bridge to convey information from gene-specific regulatory proteins to the basal RNA polymerase II transcription machinery. The Mediator complex, having a compact conformation in its free form, is recruited to promoters by direct interactions with regulatory proteins and serves for the assembly of a functional preinitiation complex with RNA polymerase II and the general transcription factors. Involved in the regulation of the circadian clock, in the control of flowering time, in freezing- and osmotic-stress tolerance and in both salicylic acid- and jasmonate-mediated defense gene expression. The sequence is that of Mediator of RNA polymerase II transcription subunit 16 (MED16) from Arabidopsis thaliana (Mouse-ear cress).